A 570-amino-acid chain; its full sequence is Urease subunit alpha (570 aa).

Residues 131–570 (GGMDSHIHFI…LPMAQRYFLF (440 aa)) form the Urease domain. Residues His136, His138, and Lys219 each coordinate Ni(2+). Lys219 is modified (N6-carboxylysine). His221 contributes to the substrate binding site. Ni(2+) contacts are provided by His248 and His274. The Proton donor role is filled by His322. Residue Asp362 coordinates Ni(2+).

The protein belongs to the metallo-dependent hydrolases superfamily. Urease alpha subunit family. Heterotrimer of UreA (gamma), UreB (beta) and UreC (alpha) subunits. Three heterotrimers associate to form the active enzyme. Ni cation serves as cofactor. Carboxylation allows a single lysine to coordinate two nickel ions.

It localises to the cytoplasm. The catalysed reaction is urea + 2 H2O + H(+) = hydrogencarbonate + 2 NH4(+). It functions in the pathway nitrogen metabolism; urea degradation; CO(2) and NH(3) from urea (urease route): step 1/1. This is Urease subunit alpha from Rhizobium johnstonii (strain DSM 114642 / LMG 32736 / 3841) (Rhizobium leguminosarum bv. viciae).